Consider the following 149-residue polypeptide: D-aminoacyl-tRNA deacylase (149 aa).

A Gly-cisPro motif, important for rejection of L-amino acids motif is present at residues 137 to 138; sequence GP.

The protein belongs to the DTD family. Homodimer.

It localises to the cytoplasm. The catalysed reaction is glycyl-tRNA(Ala) + H2O = tRNA(Ala) + glycine + H(+). The enzyme catalyses a D-aminoacyl-tRNA + H2O = a tRNA + a D-alpha-amino acid + H(+). Functionally, an aminoacyl-tRNA editing enzyme that deacylates mischarged D-aminoacyl-tRNAs. Also deacylates mischarged glycyl-tRNA(Ala), protecting cells against glycine mischarging by AlaRS. Acts via tRNA-based rather than protein-based catalysis; rejects L-amino acids rather than detecting D-amino acids in the active site. By recycling D-aminoacyl-tRNA to D-amino acids and free tRNA molecules, this enzyme counteracts the toxicity associated with the formation of D-aminoacyl-tRNA entities in vivo and helps enforce protein L-homochirality. This is D-aminoacyl-tRNA deacylase from Clostridium perfringens (strain ATCC 13124 / DSM 756 / JCM 1290 / NCIMB 6125 / NCTC 8237 / Type A).